We begin with the raw amino-acid sequence, 209 residues long: Redox-sensing transcriptional repressor Rex (209 aa).

Positions 16-55 (VYIQVLTGLKRDGVEVISSEKLARACSVNPSQIRKDLAYF) form a DNA-binding region, H-T-H motif. Residue 90–95 (GVGNLG) coordinates NAD(+).

It belongs to the transcriptional regulatory Rex family. In terms of assembly, homodimer.

It localises to the cytoplasm. Its function is as follows. Modulates transcription in response to changes in cellular NADH/NAD(+) redox state. The polypeptide is Redox-sensing transcriptional repressor Rex (Maridesulfovibrio salexigens (strain ATCC 14822 / DSM 2638 / NCIMB 8403 / VKM B-1763) (Desulfovibrio salexigens)).